A 388-amino-acid polypeptide reads, in one-letter code: Putative F-box protein At3g17490 (388 aa).

Residues 1-46 form the F-box domain; that stretch reads MMMPHLSEDLVEEILSRVPAISLKRLRYTCKQWNALFNDQRFSKKH.

This is Putative F-box protein At3g17490 from Arabidopsis thaliana (Mouse-ear cress).